Here is a 181-residue protein sequence, read N- to C-terminus: ATP-dependent protease subunit HslV (181 aa).

The active site involves Thr11. Ala166, Cys169, and Thr172 together coordinate Na(+).

Belongs to the peptidase T1B family. HslV subfamily. In terms of assembly, a double ring-shaped homohexamer of HslV is capped on each side by a ring-shaped HslU homohexamer. The assembly of the HslU/HslV complex is dependent on binding of ATP.

The protein localises to the cytoplasm. The enzyme catalyses ATP-dependent cleavage of peptide bonds with broad specificity.. With respect to regulation, allosterically activated by HslU binding. Functionally, protease subunit of a proteasome-like degradation complex believed to be a general protein degrading machinery. The protein is ATP-dependent protease subunit HslV of Chlorobaculum parvum (strain DSM 263 / NCIMB 8327) (Chlorobium vibrioforme subsp. thiosulfatophilum).